A 3177-amino-acid polypeptide reads, in one-letter code: MASSAHLVTIKRSGDDGAHFPLSLSSCLFGRSIECDIRIQLPVVSKRHCKIEVKEQEAILYNFSSTNPTQVNGVTIDEPVRLRHGDIITIIDRSFRYEDGNHEDGSKPTEFPGKSLGKEPSRRASRDSFCADPDGEGQDTKASKMTASRRSFVYAKGLSADSPASDGSKNSVSQDSSGHVEQHTGRNIVEPTSGDLFKKSRSTGSSYREPKSSPTQSLSNSNEKESPFEKLYQSMKEELDVKSQKSCRKSEPQPDRAAEESRETQLLVSGRARAKSSGSTPVTAASSPKVGKIWTERWRGGMVPVQTSTETAKMKTPVRHSQQLKDEDSRVTGRRHSVNLDEGESAQAVHKTVTPGKLATRNQAAVEAGDVASPADTPEHSSSKKRSIPAKVEAPSAETQKRLSLTQRLVPGEKKTPKGSFSKPEKLATAAEQTCSGLPGLSSVDISNFGDSINKSEGMPMKRRRVSFGGHLRPELFDENLPPNTPLKRGETPTKRKSLGTHSPAVLKTIIKERPQSPGKQESPGITPPRTNDQRRRSGRTSSGSKFLCETDIPKKAGRKSGNLPAKRASISRSQHGILQMICSKRRSGASEANLIVAKSWADVVKLGVKQTQTKVAKHVPQKQTSKRQRRPSTPKKPTSNLHNQFTTGHANSPCTIVVGRAQIEKVSVPARPYKMLNNLMLNRKVDFSEDLSGLTEMFKTPVKEKQQQMSDTGSVLSNSANLSERQLQVTNSGDIPEPITTEILGEKVLSSTRNAAKQQSDRYSASPTLRRRSIKHENTVQTPKNVHNITDLEKKTPVSETEPLKTASSVSKLRRSRELRHTLVETMNEKTEAVLAENTTARHLRGTFREQKVDQQVQDNENAPQRCKESGELSEGSEKTSARRSSARKQKPTKDLLGSQMVTQTADYAEELLSQGQGTIQNLEESMHMQNTSISEDQGITEKKVNIIVYATKEKHSPKTPGKKAQPLEGPAGLKEHFETPNPKDKPITEDRTRVLCKSPQVTTENITTNTKPQTSTSGKKVDMKEESSALTKRIHMPGESRHNPKILKLECEDIKALKQSENEMLTSTVNGSKRTLEKSKKKAQPLEDLTCFQELFISPVPTNIIKKIPSKSPHTQPVRTPASTKRLSKTGLSKVDVRQEPSTLGKRTKSPGRAPGTPAPVQEENDSTAFMETPKQKLDFAGNSSGSKRRSRTSKNRSQPLEDLDGFQELFQTPAGASDSVTVEESAKISLESSQAEPVKTPASTKRRSKMSLMKVDMKELSILEKQTQSRGRDAGTPAPMQEGNGTTAIMETPKQKLDFTGNSTGHKRRPRTPKIRAQPLEDLDGFQELFQTPAGANDSVTVEESAKMSLESSQAEPVKTPASTKRLSKTDLSKVDVREDPSILGKKTKSPGRAPGTPAPVQEENDCTAYMETPKQKLESIENLTGLRKQSRTPKDITGFQDSFQIPDHANGPLVVVKTKKMFFNSPQPESAITRKSRERQSRASISKIDVKEELLESEEHLQLGEGVDTFQVSTNKVIRSSRKPAKRKLDSTAGMPNSKRMRCSSKDNTPCLEDLNGFQELFQMPGYANDSLTTGISTMLARSPQLGPVRTQINKKSLPKIILRKMDVTEEISGLWKQSLGRVHTTQEQEDNAIKAIMEIPKETLQTAADGTRLTRQPQTPKEKVQPLEDHSVFQELFQTSRYCSDPLIGNKQTRMSLRSPQPGFVRTPRTSKRLAKTSVGNIAVREKISPVSLPQCATGEVVHIPIGPEDDTENKGVKESTPQTLDSSASRTVSKRQQGAHEERPQFSGDLFHPQELFQTPASGKDPVTVDETTKIALQSPQPGHIINPASMKRQSNMSLRKDMREFSILEKQTQSRGRDAGTPAPMQEENGTTAIMETPKQKLDFIGNSTGHKRRPRTPKNRAQPLEDLDGFQELFQTPAGASDPVSVEESAKISLASSQAEPVRTPASTKRRSKTGLSKVDVRQEPSTLGKRMKSLGRAPGTPAPVQEENDSTAFMETPKQKLDFTGNSSGHKRRPQTPKIRAQPLEDLDGFQELFQTPAGANDSVTVEESVKMSLESSQAEPVKTPASTKRLSKTGLSKVDVREDPSILEKKTKSPGTPAPVQEENDCTAFMETPKQKLDFTGNSSGHKRRPRTPKIRAQPLEDLDGFQELFQTPAGASDSVTVEESAKMSLESSQAKPVKTPASTKRLSKTGLSKVDVREDPSTLGKKTKSPGRAPGTPAPVQEENDSTAFMETPKQKLDFAENSSGSKRRSRTSKNRSQPLEDLDGFQELFQTPAGASNPVSVEESAKISLESSQAEPVRTRASTKRLSKTGLNKMDVREGHSPLSKSSCASQKVMQTLTLGEDHGRETKDGKVLLAQKLEPAIYVTRGKRQQRSCKKRSQSPEDLSGVQEVFQTSGHNKDSVTVDNLAKLPSSSPPLEPTDTSVTSRRQARTGLRKVHVKNELSGGIMHPQISGEIVDLPREPEGEGKVIKTRKQSVKRKLDTEVNVPRSKRQRITRAEKTLEDLPGFQELCQAPSLVMDSVIVEKTPKMPDKSPEPVDTTSETQARRRLRRLVVTEEPIPQRKTTRVVRQTRNTQKEPISDNQGMEEFKESSVQKQDPSVSLTGRRNQPRTVKEKTQPLEELTSFQEETAKRISSKSPQPEEKETLAGLKRQLRIQLINDGVKEEPTAQRKQPSRETRNTLKEPVGDSINVEEVKKSTKQKIDPVASVPVSKRPRRVPKEKAQALELAGLKGPIQTLGHTDESASDKGPTQMPCNSLQPEQVDSFQSSPRRPRTRRGKVEADEEPSAVRKTVSTSRQTMRSRKVPEIGNNGTQVSKASIKQTLDTVAKVTGSRRQLRTHKDGVQPLEVLGDSKEITQISDHSEKLAHDTSILKSTQQQKPDSVKPLRTCRRVLRASKEDPKEVLVDTRDHATLQSKSNPLLSPKRKSARDGSIVRTRALRSLAPKQEATDEKPVPEKKRAASSKRHVSPEPVKMKHLKIVSNKLESVEEQVSTVMKTEEMEAKRENPVTPDQNSRYRKKTNVKQPRPKFDASAENVGIKKNEKTMKTASQETELQNPDDGAKKSTSRGQVSGKRTCLRSRGTTEMPQPCEAEEKTSKPAAEILIKPQEEKGVSGESDVRCLRSRKTRVALDSEPKPRVTRGTKKDAKTLKEDEDIVCTKKLRTRS.

Positions 27-76 (CLFGRSIECDIRIQLPVVSKRHCKIEVKEQEAILYNFSSTNPTQVNGVTI) constitute an FHA domain. Composition is skewed to basic and acidic residues over residues 98–107 (EDGNHEDGSK) and 116–126 (LGKEPSRRASR). Disordered stretches follow at residues 98 to 442 (EDGN…PGLS) and 473 to 572 (RPEL…ASIS). Ser-125, Ser-128, and Ser-162 each carry phosphoserine. Polar residues-rich tracts occupy residues 165–177 (SDGS…QDSS) and 202–221 (STGS…LSNS). Basic and acidic residues predominate over residues 235-263 (MKEELDVKSQKSCRKSEPQPDRAAEESRE). Lys-236 is covalently cross-linked (Glycyl lysine isopeptide (Lys-Gly) (interchain with G-Cter in SUMO2)). Residues Ser-250, Ser-276, Ser-277, Ser-286, and Ser-287 each carry the phosphoserine modification. The segment covering 276 to 286 (SSGSTPVTAAS) has biased composition (polar residues). Phosphothreonine occurs at positions 307 and 316. Phosphoserine occurs at positions 321, 337, 373, 498, 503, and 588. A positively charged patch (CP) region spans residues 455–618 (KSEGMPMKRR…VKQTQTKVAK (164 aa)). In terms of domain architecture, PP1-binding spans 462–509 (KRRRVSFGGHLRPELFDENLPPNTPLKRGETPTKRKSLGTHSPAVLKT). The segment at 614-652 (TKVAKHVPQKQTSKRQRRPSTPKKPTSNLHNQFTTGHAN) is disordered. The segment covering 616 to 634 (VAKHVPQKQTSKRQRRPST) has biased composition (basic residues). Residues 636–652 (KKPTSNLHNQFTTGHAN) show a composition bias toward polar residues. At Thr-701 the chain carries Phosphothreonine. Disordered regions lie at residues 793–815 (LEKK…SKLR), 835–901 (VLAE…LGSQ), and 956–989 (KHSP…DKPI). Residues 855 to 864 (DQQVQDNENA) are compositionally biased toward polar residues. 2 stretches are compositionally biased toward basic and acidic residues: residues 867–882 (RCKE…EKTS) and 975–989 (LKEH…DKPI). K167R repeat units lie at residues 994–1101 (TRVL…FISP), 1108–1216 (KKIP…FQTP), 1228–1336 (SAKI…FQTP), 1348–1450 (SAKM…FQIP), 1461–1569 (KTKK…FQMP), 1582–1684 (TMLA…LFQT), 1696–1806 (KQTR…FQTP), 1817–1925 (ETTK…FQTP), 1937–2046 (SAKI…FQTP), 2059–2163 (VKMS…FQTP), 2175–2284 (SAKM…FQTP), 2296–2405 (SAKI…VFQT), 2419–2526 (AKLP…CQAP), 2537–2639 (KTPK…SFQE), 2643–2748 (KRIS…PIQT), and 2762–2870 (TQMP…ITQI). Residues Lys-1013 and Lys-1026 each participate in a glycyl lysine isopeptide (Lys-Gly) (interchain with G-Cter in SUMO2) cross-link. Ser-1062 carries the phosphoserine modification. A Glycyl lysine isopeptide (Lys-Gly) (interchain with G-Cter in SUMO1); alternate cross-link involves residue Lys-1082. Lys-1082 is covalently cross-linked (Glycyl lysine isopeptide (Lys-Gly) (interchain with G-Cter in SUMO2); alternate). 2 disordered regions span residues 1109-1321 (KIPS…IRAQ) and 1334-1410 (QTPA…ENDC). Residue Ser-1114 is modified to Phosphoserine. Residues 1114-1127 (SPHTQPVRTPASTK) show a composition bias toward polar residues. Position 1122 is a phosphothreonine (Thr-1122). Position 1125 is a phosphoserine (Ser-1125). Position 1150 is a phosphothreonine (Thr-1150). Position 1152 is a phosphoserine (Ser-1152). Residues Thr-1159 and Thr-1175 each carry the phosphothreonine modification. Phosphoserine is present on Ser-1189. Thr-1215 carries the post-translational modification Phosphothreonine. Ser-1235 is modified (phosphoserine). 5 positions are modified to phosphothreonine: Thr-1243, Thr-1279, Thr-1295, Thr-1307, and Thr-1315. The span at 1308-1317 (GHKRRPRTPK) shows a compositional bias: basic residues. Lys-1317 is covalently cross-linked (Glycyl lysine isopeptide (Lys-Gly) (interchain with G-Cter in SUMO2)). Thr-1335 carries the phosphothreonine modification. Residues 1353-1368 (LESSQAEPVKTPASTK) are compositionally biased toward polar residues. Position 1356 is a phosphoserine (Ser-1356). The residue at position 1363 (Thr-1363) is a Phosphothreonine. Phosphoserine is present on Ser-1366. Over residues 1371-1384 (SKTDLSKVDVREDP) the composition is skewed to basic and acidic residues. A phosphothreonine mark is found at Thr-1400 and Thr-1416. Residue Ser-1469 is modified to Phosphoserine. Phosphothreonine is present on Thr-1477. Ser-1480 carries the post-translational modification Phosphoserine. Residue Thr-1513 is modified to Phosphothreonine. Residues 1526–1550 (RKPAKRKLDSTAGMPNSKRMRCSSK) form a disordered region. Phosphoserine occurs at positions 1542 and 1587. N6-acetyllysine is present on Lys-1609. Lys-1668 participates in a covalent cross-link: Glycyl lysine isopeptide (Lys-Gly) (interchain with G-Cter in SUMO2). A phosphothreonine mark is found at Thr-1684 and Thr-1712. At Ser-1734 the chain carries Phosphoserine. The disordered stretch occupies residues 1749 to 1797 (IPIGPEDDTENKGVKESTPQTLDSSASRTVSKRQQGAHEERPQFSGDLF). The span at 1765-1782 (STPQTLDSSASRTVSKRQ) shows a compositional bias: polar residues. Thr-1766 is subject to Phosphothreonine. Ser-1779 carries the post-translational modification Phosphoserine. Position 1805 is a phosphothreonine (Thr-1805). Ser-1825 carries the phosphoserine modification. Phosphothreonine is present on residues Thr-1859, Thr-1868, Thr-1884, and Thr-1924. The disordered stretch occupies residues 1925-2033 (PAGASDPVSV…QTPKIRAQPL (109 aa)). Ser-1944 is modified (phosphoserine). Position 1966 is an N6-acetyllysine (Lys-1966). 3 positions are modified to phosphothreonine: Thr-1989, Thr-2005, and Thr-2025. Residue Lys-2027 forms a Glycyl lysine isopeptide (Lys-Gly) (interchain with G-Cter in SUMO1); alternate linkage. Lys-2027 is covalently cross-linked (Glycyl lysine isopeptide (Lys-Gly) (interchain with G-Cter in SUMO2); alternate). The residue at position 2045 (Thr-2045) is a Phosphothreonine. A disordered region spans residues 2047–2112 (AGANDSVTVE…SPGTPAPVQE (66 aa)). Positions 2063–2078 (LESSQAEPVKTPASTK) are enriched in polar residues. At Ser-2065 the chain carries Phosphoserine. Position 2073 is a phosphothreonine (Thr-2073). Ser-2076, Ser-2095, and Ser-2103 each carry phosphoserine. Residues 2088–2101 (VDVREDPSILEKKT) show a composition bias toward basic and acidic residues. Thr-2106 and Thr-2122 each carry phosphothreonine. The interval 2124–2343 (KQKLDFTGNS…PLSKSSCASQ (220 aa)) is disordered. The span at 2135–2144 (GHKRRPRTPK) shows a compositional bias: basic residues. The residue at position 2162 (Thr-2162) is a Phosphothreonine. Residues 2180–2195 (LESSQAKPVKTPASTK) show a composition bias toward polar residues. Position 2182 is a phosphoserine (Ser-2182). Thr-2190 carries the post-translational modification Phosphothreonine. Position 2198 is a phosphoserine (Ser-2198). Thr-2218 carries the phosphothreonine modification. Residue Ser-2220 is modified to Phosphoserine. Phosphothreonine occurs at positions 2227, 2243, and 2283. Ser-2303 carries the post-translational modification Phosphoserine. 2 positions are modified to phosphothreonine: Thr-2311 and Thr-2348. Over residues 2378-2390 (RGKRQQRSCKKRS) the composition is skewed to basic residues. Residues 2378–2447 (RGKRQQRSCK…RRQARTGLRK (70 aa)) form a disordered region. Phosphoserine is present on residues Ser-2390 and Ser-2392. Thr-2405 carries the post-translational modification Phosphothreonine. Residues Ser-2423 and Ser-2425 each carry the phosphoserine modification. A Glycyl lysine isopeptide (Lys-Gly) (interchain with G-Cter in SUMO1) cross-link involves residue Lys-2451. Ser-2464, Ser-2487, Ser-2545, and Ser-2592 each carry phosphoserine. A compositionally biased stretch (basic and acidic residues) spans 2538-2547 (TPKMPDKSPE). Disordered regions lie at residues 2538–2828 (TPKM…QVSK) and 2879–3160 (HDTS…DAKT). The segment covering 2605–2622 (VQKQDPSVSLTGRRNQPR) has biased composition (polar residues). Phosphoserine is present on Ser-2649. 2 stretches are compositionally biased toward basic and acidic residues: residues 2673–2697 (GVKE…KEPV) and 2704–2714 (EEVKKSTKQKI). A Glycyl lysine isopeptide (Lys-Gly) (interchain with G-Cter in SUMO1); alternate cross-link involves residue Lys-2675. Lys-2675 participates in a covalent cross-link: Glycyl lysine isopeptide (Lys-Gly) (interchain with G-Cter in SUMO2); alternate. Polar residues-rich tracts occupy residues 2764–2781 (MPCN…QSSP) and 2883–2892 (ILKSTQQQKP). Ser-2768 and Ser-2780 each carry phosphoserine. Positions 2907–2923 (ASKEDPKEVLVDTRDHA) are enriched in basic and acidic residues. Residue Lys-2909 forms a Glycyl lysine isopeptide (Lys-Gly) (interchain with G-Cter in SUMO2) linkage. N6-acetyllysine is present on Lys-2928. Residues 2959–2971 (EATDEKPVPEKKR) show a composition bias toward basic and acidic residues. 2973–2980 (ASSKRHVS) contributes to the ATP binding site. Ser-2980 is subject to Phosphoserine. Residues 3008 to 3018 (KTEEMEAKREN) show a composition bias toward basic and acidic residues. A Phosphothreonine modification is found at Thr-3021. Residues 3039–3057 (PKFDASAENVGIKKNEKTM) are compositionally biased toward basic and acidic residues. Residues 3058-3067 (KTASQETELQ) show a composition bias toward polar residues. Position 3061 is a phosphoserine (Ser-3061). Basic and acidic residues-rich tracts occupy residues 3118–3132 (PQEE…DVRC) and 3140–3160 (VALD…DAKT).

In terms of assembly, interacts with KIF15. Interacts (via the FHA domain) with NIFK. Interacts with PPP1CC. Component of a complex at least composed of ZNF335, HCFC1, CCAR2, EMSY, MKI67, RBBP5, ASH2L and WDR5; the complex is formed as a result of interactions between components of a nuclear receptor-mediated transcription complex and a histone methylation complex. Interacts with ZNF335. Hyperphosphorylated by CDK1 in mitosis; hyperphosphorylatiom prevents undergoing liquid-liquid phase separation. Dephosphorylated by PPP1CC at the onset of anaphase. Dephosphorylation by protein phosphatase 2A (PP2A) and simultaneous exposure of the positively charged patch (CP) during mitotic exit induce the RNA-dependent formation of a liquid-like condensed phase on the chromosome surface. In terms of processing, ubiquitinated by the APC/C complex after neuronal progenitors exit mitosis during brain development, leading to clearance from constitutive heterochromatin. As to expression, mainly present in proliferating cells (at protein level).

Its subcellular location is the chromosome. The protein resides in the nucleus. The protein localises to the nucleolus. Functionally, protein that associates with the surface of mitotic chromosomes and acts both as a chromosome repellent during early mitosis and chromosome attractant during late mitosis. Required to maintain individual mitotic chromosomes dispersed in the cytoplasm following nuclear envelope disassembly. During early mitosis, relocalizes from nucleoli to the chromosome surface where it forms extended brush structures that cover a substantial fraction of the chromosome surface. The MKI67 brush structure prevents chromosomes from collapsing into a single chromatin mass by forming a steric and electrostatic charge barrier: the protein has a high net electrical charge and acts as a surfactant, dispersing chromosomes and enabling independent chromosome motility. During mitotic anaphase, the MKI67 brush structure collapses and MKI67 switches from a chromosome repellent to a chromosome attractant to promote chromosome clustering and facilitate the exclusion of large cytoplasmic particles from the future nuclear space. Mechanistically, dephosphorylation during mitotic exit and simultaneous exposure of a conserved basic patch induce the RNA-dependent formation of a liquid-like condensed phase on the chromosome surface, promoting coalescence of neighboring chromosome surfaces and clustering of chromosomes. Binds premature ribosomal RNAs during anaphase; promoting liquid-liquid phase separation. Binds DNA, with a preference for supercoiled DNA and AT-rich DNA. Does not contribute to the internal structure of mitotic chromosomes. May play a role in chromatin organization; it is however unclear whether it plays a direct role in chromatin organization or whether it is an indirect consequence of its function in mitotic chromosome. This is Proliferation marker protein Ki-67 from Mus musculus (Mouse).